We begin with the raw amino-acid sequence, 120 residues long: Aspartate 1-decarboxylase (120 aa).

Ser25 acts as the Schiff-base intermediate with substrate; via pyruvic acid in catalysis. At Ser25 the chain carries Pyruvic acid (Ser). Thr57 contacts substrate. Tyr58 functions as the Proton donor in the catalytic mechanism. Substrate is bound at residue 73-75 (GAA).

The protein belongs to the PanD family. In terms of assembly, heterooctamer of four alpha and four beta subunits. Pyruvate serves as cofactor. Is synthesized initially as an inactive proenzyme, which is activated by self-cleavage at a specific serine bond to produce a beta-subunit with a hydroxyl group at its C-terminus and an alpha-subunit with a pyruvoyl group at its N-terminus.

The protein resides in the cytoplasm. The enzyme catalyses L-aspartate + H(+) = beta-alanine + CO2. It participates in cofactor biosynthesis; (R)-pantothenate biosynthesis; beta-alanine from L-aspartate: step 1/1. Functionally, catalyzes the pyruvoyl-dependent decarboxylation of aspartate to produce beta-alanine. This is Aspartate 1-decarboxylase from Polynucleobacter asymbioticus (strain DSM 18221 / CIP 109841 / QLW-P1DMWA-1) (Polynucleobacter necessarius subsp. asymbioticus).